The sequence spans 458 residues: Putative U-box domain-containing protein 46 (458 aa).

The U-box domain occupies 71–144; sequence EVPKEFICTL…TQWCLVNKYD (74 aa). 2 ARM repeats span residues 241–281 and 283–322; these read ESNK…SLSA and DSNK…NLCI.

The enzyme catalyses S-ubiquitinyl-[E2 ubiquitin-conjugating enzyme]-L-cysteine + [acceptor protein]-L-lysine = [E2 ubiquitin-conjugating enzyme]-L-cysteine + N(6)-ubiquitinyl-[acceptor protein]-L-lysine.. It participates in protein modification; protein ubiquitination. Functions as an E3 ubiquitin ligase. The protein is Putative U-box domain-containing protein 46 (PUB46) of Arabidopsis thaliana (Mouse-ear cress).